Reading from the N-terminus, the 54-residue chain is ATP synthase F(0) complex subunit 8 (54 aa).

The chain crosses the membrane as a helical span at residues 9–25 (WVFLFFLVWLVLGFLGL).

This sequence belongs to the ATPase protein 8 family. In terms of assembly, component of the ATP synthase complex composed at least of ATP5F1A/subunit alpha, ATP5F1B/subunit beta, ATP5MC1/subunit c (homooctomer), MT-ATP6/subunit a, MT-ATP8/subunit 8, ATP5ME/subunit e, ATP5MF/subunit f, ATP5MG/subunit g, ATP5MK/subunit k, ATP5MJ/subunit j, ATP5F1C/subunit gamma, ATP5F1D/subunit delta, ATP5F1E/subunit epsilon, ATP5PF/subunit F6, ATP5PB/subunit b, ATP5PD/subunit d, ATP5PO/subunit OSCP. ATP synthase complex consists of a soluble F(1) head domain (subunits alpha(3) and beta(3)) - the catalytic core - and a membrane F(0) domain - the membrane proton channel (subunits c, a, 8, e, f, g, k and j). These two domains are linked by a central stalk (subunits gamma, delta, and epsilon) rotating inside the F1 region and a stationary peripheral stalk (subunits F6, b, d, and OSCP).

It localises to the mitochondrion membrane. Its function is as follows. Subunit 8, of the mitochondrial membrane ATP synthase complex (F(1)F(0) ATP synthase or Complex V) that produces ATP from ADP in the presence of a proton gradient across the membrane which is generated by electron transport complexes of the respiratory chain. ATP synthase complex consist of a soluble F(1) head domain - the catalytic core - and a membrane F(1) domain - the membrane proton channel. These two domains are linked by a central stalk rotating inside the F(1) region and a stationary peripheral stalk. During catalysis, ATP synthesis in the catalytic domain of F(1) is coupled via a rotary mechanism of the central stalk subunits to proton translocation. In vivo, can only synthesize ATP although its ATP hydrolase activity can be activated artificially in vitro. Part of the complex F(0) domain. This is ATP synthase F(0) complex subunit 8 from Branchiostoma lanceolatum (Common lancelet).